Reading from the N-terminus, the 391-residue chain is Saxitoxin and tetrodotoxin-binding protein 2 (391 aa).

The signal sequence occupies residues 1 to 20; sequence MGAVPGVVLLLMLAVLGIRA. Tandem repeats lie at residues 24 to 202 and 203 to 391. N-linked (GlcNAc...) asparagine glycans are attached at residues asparagine 41, asparagine 54, asparagine 63, asparagine 97, asparagine 234, asparagine 268, asparagine 277, and asparagine 307.

Homodimer or heterodimer of PSTBP1 and PSTBP2. Post-translationally, glycosylated.

Its subcellular location is the secreted. In terms of biological role, binds both saxitoxin and tetradotoxin. May play a role in toxin accumulation and/or excretion. The polypeptide is Saxitoxin and tetrodotoxin-binding protein 2 (psbp2) (Takifugu pardalis (Panther puffer)).